The following is a 240-amino-acid chain: MLQVQHENHFFLFNFDENRPNQEHFFESYFWQKQNRIIGSAKGRGTTWFIQSQDLFGVNTALRHYYRGGLWGKINKDRYAFSSLEETRSFAEFNLLNRLYQAGLPVPKPIGAHVEKLAFNHYRADLLSERIENTQDLTALLPNTELTAEQWQQIGKLIRRLHDLQICHTDLNAHNILIRQQNNDTKFWLIDFDKCGEKPGNLWKQENLQRLHRSFLKEVKRMRIQFSEKNWADLLNGYQN.

Asp-170 is a catalytic residue.

This sequence belongs to the protein kinase superfamily. KdkA/RfaP family.

It localises to the cell inner membrane. It carries out the reaction an alpha-Kdo-(2-&gt;6)-lipid IVA + ATP = a 4-O-phospho-alpha-Kdo-(2-&gt;6)-lipid IVA + ADP + H(+). It functions in the pathway bacterial outer membrane biogenesis; LPS core biosynthesis. In terms of biological role, catalyzes the ATP-dependent phosphorylation of the 3-deoxy-D-manno-octulosonic acid (Kdo) residue in Kdo-lipid IV(A) at the 4-OH position. This chain is 3-deoxy-D-manno-octulosonic acid kinase, found in Mannheimia succiniciproducens (strain KCTC 0769BP / MBEL55E).